Reading from the N-terminus, the 526-residue chain is Dolichyl pyrophosphate Glc1Man9GlcNAc2 alpha-1,3-glucosyltransferase (526 aa).

11 helical membrane passes run 9–29 (AGGHWFSALALGVTLLKCLLI), 108–128 (FSVILTDALFVYAVHECCKCI), 143–163 (FILSVLLLWNFGLLIVDHIHF), 188–208 (GALLFAVLLHLKHIYLYVAPA), 238–258 (VTSLGLIVFLVSALSLGPFLA), 334–354 (PLATLICTLIAILPSVFCLWF), 361–380 (GFLRCLVLCALSSFMFGWHV), 400–422 (AGDATVFLILATTGHYSLFPLLF), 427–449 (LPIKILLMLLFTVYSISSLKTLF), 461–481 (TVYLLGLGPLEVCCEFLLPFT), and 487–507 (YPFIPLLLTSVYCAVGITYAW).

It belongs to the ALG6/ALG8 glucosyltransferase family.

The protein resides in the endoplasmic reticulum membrane. It catalyses the reaction an alpha-D-Glc-(1-&gt;3)-alpha-D-Man-(1-&gt;2)-alpha-D-Man-(1-&gt;2)-alpha-D-Man-(1-&gt;3)-[alpha-D-Man-(1-&gt;2)-alpha-D-Man-(1-&gt;3)-[alpha-D-Man-(1-&gt;2)-alpha-D-Man-(1-&gt;6)]-alpha-D-Man-(1-&gt;6)]-beta-D-Man-(1-&gt;4)-beta-D-GlcNAc-(1-&gt;4)-alpha-D-GlcNAc-diphospho-di-trans,poly-cis-dolichol + a di-trans,poly-cis-dolichyl beta-D-glucosyl phosphate = an alpha-D-Glc-(1-&gt;3)-alpha-D-Glc-(1-&gt;3)-alpha-D-Man-(1-&gt;2)-alpha-D-Man-(1-&gt;2)-alpha-D-Man-(1-&gt;3)-[alpha-D-Man-(1-&gt;2)-alpha-D-Man-(1-&gt;3)-[alpha-D-Man-(1-&gt;2)-alpha-D-Man-(1-&gt;6)]-alpha-D-Man-(1-&gt;6)]-beta-D-Man-(1-&gt;4)-beta-D-GlcNAc-(1-&gt;4)-alpha-D-GlcNAc-diphospho-di-trans,poly-cis-dolichol + a di-trans,poly-cis-dolichyl phosphate + H(+). Its pathway is protein modification; protein glycosylation. Functionally, dolichyl pyrophosphate Glc1Man9GlcNAc2 alpha-1,3-glucosyltransferase that operates in the biosynthetic pathway of dolichol-linked oligosaccharides, the glycan precursors employed in protein asparagine (N)-glycosylation. The assembly of dolichol-linked oligosaccharides begins on the cytosolic side of the endoplasmic reticulum membrane and finishes in its lumen. The sequential addition of sugars to dolichol pyrophosphate produces dolichol-linked oligosaccharides containing fourteen sugars, including two GlcNAcs, nine mannoses and three glucoses. Once assembled, the oligosaccharide is transferred from the lipid to nascent proteins by oligosaccharyltransferases. In the lumen of the endoplasmic reticulum, adds the second glucose residue from dolichyl phosphate glucose (Dol-P-Glc) onto the lipid-linked oligosaccharide intermediate Glc(1)Man(9)GlcNAc(2)-PP-Dol to produce Glc(2)Man(9)GlcNAc(2)-PP-Dol. Glc(2)Man(9)GlcNAc(2)-PP-Dol is a substrate for ALG10, the following enzyme in the biosynthetic pathway. Required for PKD1/Polycystin-1 maturation and localization to the plasma membrane of the primary cilia. The polypeptide is Dolichyl pyrophosphate Glc1Man9GlcNAc2 alpha-1,3-glucosyltransferase (Mus musculus (Mouse)).